Reading from the N-terminus, the 1194-residue chain is Multidrug efflux ATP-binding/permease protein BCG_0231 (1194 aa).

6 helical membrane passes run 20–40 (LLLG…VPLV), 56–76 (LAPW…LTYV), 130–150 (LLFD…GVAV), 153–173 (WLSV…GLIA), 258–278 (FALG…FVAF), and 279–299 (WACL…LTIA). Residues 21-301 (LLGFGAALAG…LAGMLTIAQQ (281 aa)) form the ABC transmembrane type-1 1 domain. The ABC transporter 1 domain maps to 334–568 (LEFQRVSFGY…CPRYRELLSP (235 aa)). Residue 367–374 (GAPGSGKS) coordinates ATP. Helical transmembrane passes span 628-648 (ALSL…PLLI), 660-680 (VLSA…IRWV), 743-763 (LVVA…LLAI), 765-785 (ARLV…TWQF), 847-867 (LLAL…TLVL), and 878-898 (VISV…YTPI). An ABC transmembrane type-1 2 domain is found at 628–910 (ALSLLLVAVQ…LAQMFDDYQR (283 aa)). The region spanning 942 to 1177 (VVFDAVHYSY…GGHYSRLWAA (236 aa)) is the ABC transporter 2 domain. Residue 976-983 (GSTGSGKS) participates in ATP binding.

Belongs to the ABC transporter superfamily. Lipid exporter (TC 3.A.1.106) family.

The protein localises to the cell inner membrane. Its function is as follows. Overexpression increases resistance to chloramphenicol, ampicillin, streptomycin, tetracyclin and vancomycin. The sequence is that of Multidrug efflux ATP-binding/permease protein BCG_0231 from Mycobacterium bovis (strain BCG / Pasteur 1173P2).